A 734-amino-acid chain; its full sequence is Monosaccharide-sensing protein 1 (734 aa).

6 helical membrane-spanning segments follow: residues 6-26 (LVALAATIGNFLQGWDNATIA), 44-64 (GLVVAMSLIGATVITTCSGPI), 79-99 (VMYFVCGLIMLWSPNVYVLCF), 102-122 (LLNGFGAGLAVTLVPVYISET), 133-153 (TLPQFLGSGGMFLSYCMVFTM), and 163-183 (AMLGVLSIPSLLYLFLTVFYL). Positions 351-403 (YNKDNDDYATDDGAGDDDDSDNDLRSPLMSRQTTSMDKDMIPHPTSGSTLSMR) are disordered. Over residues 357–371 (DYATDDGAGDDDDSD) the composition is skewed to acidic residues. Phosphoserine is present on residues S446 and S480. Helical transmembrane passes span 510 to 530 (ALVVGVGIQILQQFSGINGVL), 556 to 576 (ASFLISGLTTLLMLPAIVVAM), 588 to 608 (LLWTIPVLIVSLVVLVISELI), 621 to 641 (GCVVLYFCFFVMGYGPIPNIL), 653 to 673 (LCIAICAMVFWIGDIIVTYSL), and 680 to 700 (IGLVGVFSIYAAVCVISWIFV).

Belongs to the major facilitator superfamily. Sugar transporter (TC 2.A.1.1) family. Binds to VIK at the tonoplast. In terms of processing, phosphorylated by VIK; this activation promotes carrier activity. In terms of tissue distribution, mostly expressed in juvenile and adult leaves, to a lower extent, in flower tissues, and, at low levels, in roots and stems.

It localises to the vacuole membrane. It carries out the reaction D-glucose(out) + H(+)(in) = D-glucose(in) + H(+)(out). The catalysed reaction is sucrose(out) + H(+)(in) = sucrose(in) + H(+)(out). Enhanced activation by VIK-mediated phosphorylation promoting carrier activity and consequently vacuolar sugar accumulation. In terms of biological role, sugar proton-coupled antiporter which contributes to vacuolar sugar import (e.g. monosaccharides including glucose, sucrose and fructose), particularly during stress responses (e.g. in response to cold). Required for cytosolic glucose homeostasis. The polypeptide is Monosaccharide-sensing protein 1 (Arabidopsis thaliana (Mouse-ear cress)).